Reading from the N-terminus, the 250-residue chain is Probable fimbrial chaperone YfcS (250 aa).

Positions 1 to 28 (MSDLLCSAKLGAMTLALLLSATSLSALA) are cleaved as a signal peptide.

This sequence belongs to the periplasmic pilus chaperone family.

The protein resides in the periplasm. Its function is as follows. Part of the yfcOPQRSUV fimbrial operon. Could contribute to adhesion to various surfaces in specific environmental niches. Increases adhesion to eukaryotic T24 bladder epithelial cells in the absence of fim genes. This Escherichia coli (strain K12) protein is Probable fimbrial chaperone YfcS (yfcS).